The sequence spans 539 residues: Dopamine receptor 2 (539 aa).

The Extracellular portion of the chain corresponds to 1–113 (MVDDNGSSPE…LPNDRVGLLA (113 aa)). N-linked (GlcNAc...) asparagine glycosylation is found at Asn5, Asn31, Asn47, and Asn68. Residues 114-134 (FLFLFSFATVFGNSLVILAVI) traverse the membrane as a helical segment. Residues 135 to 145 (RERYLHTATNY) are Cytoplasmic-facing. Residues 146-166 (FITSLAVADCLVGLVVMPFSA) traverse the membrane as a helical segment. Topologically, residues 167–189 (LYEVLENTWFFGTDWCDIWRSLD) are extracellular. Residues Cys182 and Cys261 are joined by a disulfide bond. Residues 190–206 (VLFSTASILNLCVISLD) form a helical membrane-spanning segment. Topologically, residues 207-227 (RYWAITDPFSYPMRMTVKRAA) are cytoplasmic. Residues 228–248 (GLIAAVWICSSAISFPAIVWW) form a helical membrane-spanning segment. Over 249–266 (RAARDGEMPAYKCTFTEH) the chain is Extracellular. A helical transmembrane segment spans residues 267–287 (LGYLVFSSTISFYLPLLVMVF). The Cytoplasmic segment spans residues 288–420 (TYCRIYRAAV…FAKEKKAAKT (133 aa)). The tract at residues 326–387 (GGTTRDQQNQ…EPDDEPLSAL (62 aa)) is disordered. Over residues 337–352 (SGGGGGGGGGGGGGGS) the composition is skewed to gly residues. A compositionally biased stretch (basic residues) spans 356 to 367 (SHSHSHHHHHNH). Residues 421–441 (LGIVMGVFIICWLPFFVVNLL) form a helical membrane-spanning segment. Residues 442–453 (SGFCIECIEHEE) are Extracellular-facing. A helical membrane pass occupies residues 454–474 (IVSAIVTWLGWINSCMNPVIY). Topologically, residues 475 to 539 (ACWSRDFRRA…RHNSCEQTYI (65 aa)) are cytoplasmic. Residues Cys492 and Cys493 are each lipidated (S-palmitoyl cysteine).

The protein belongs to the G-protein coupled receptor 1 family. Expressed in both central and peripheral nervous systems.

The protein resides in the cell membrane. Receptor for dopamine. The activity of this receptor is mediated by G proteins which activate adenylyl cyclase. Also capable of generating a calcium signal. In terms of antagonist responses, would be classed with the D1-like dopamine receptor group. This receptor is an attractive candidate for initiating biochemical cascades underlying olfactory learning. This chain is Dopamine receptor 2 (Dop1R2), found in Drosophila melanogaster (Fruit fly).